The following is a 142-amino-acid chain: Transcriptional regulator MraZ (142 aa).

SpoVT-AbrB domains lie at A5 to E51 and A77 to S120.

This sequence belongs to the MraZ family. Forms oligomers.

It is found in the cytoplasm. Its subcellular location is the nucleoid. This Verminephrobacter eiseniae (strain EF01-2) protein is Transcriptional regulator MraZ.